We begin with the raw amino-acid sequence, 89 residues long: Small ribosomal subunit protein uS15 (89 aa).

It belongs to the universal ribosomal protein uS15 family. As to quaternary structure, part of the 30S ribosomal subunit. Forms a bridge to the 50S subunit in the 70S ribosome, contacting the 23S rRNA.

Its function is as follows. One of the primary rRNA binding proteins, it binds directly to 16S rRNA where it helps nucleate assembly of the platform of the 30S subunit by binding and bridging several RNA helices of the 16S rRNA. Forms an intersubunit bridge (bridge B4) with the 23S rRNA of the 50S subunit in the ribosome. This chain is Small ribosomal subunit protein uS15, found in Methylorubrum populi (strain ATCC BAA-705 / NCIMB 13946 / BJ001) (Methylobacterium populi).